We begin with the raw amino-acid sequence, 471 residues long: 6-phosphofructo-2-kinase/fructose-2,6-bisphosphatase 1 (471 aa).

Residue serine 2 is modified to N-acetylserine. The tract at residues 2–250 (SPEMGELTQT…VYYLMNIHVT (249 aa)) is 6-phosphofructo-2-kinase. Serine 33 is modified (phosphoserine; by PKA). 49–57 (GLPARGKTY) contacts ATP. Residues arginine 82 and arginine 105 each coordinate beta-D-fructose 6-phosphate. Aspartate 131 is a catalytic residue. Residues threonine 133 and arginine 139 each contribute to the beta-D-fructose 6-phosphate site. A Phosphoserine modification is found at serine 141. The active site involves cysteine 161. 170-175 (NIRQVK) provides a ligand contact to ATP. Residues lysine 175, arginine 196, and tyrosine 200 each contribute to the beta-D-fructose 6-phosphate site. Residues 251-471 (PRSIYLCRHG…EALDTVPAHY (221 aa)) form a fructose-2,6-bisphosphatase region. Arginine 258 serves as a coordination point for beta-D-fructose 2,6-bisphosphate. Histidine 259 acts as the Tele-phosphohistidine intermediate in catalysis. The beta-D-fructose 2,6-bisphosphate site is built by asparagine 265, glycine 271, and arginine 308. Glutamate 328 functions as the Proton donor/acceptor in the catalytic mechanism. Tyrosine 339, arginine 353, lysine 357, tyrosine 368, glutamine 394, and arginine 398 together coordinate beta-D-fructose 2,6-bisphosphate. Residue 350–353 (FALR) participates in ATP binding. ATP is bound by residues 394–398 (QAVMR) and tyrosine 430.

In the C-terminal section; belongs to the phosphoglycerate mutase family. In terms of assembly, homodimer. As to expression, liver.

It catalyses the reaction beta-D-fructose 2,6-bisphosphate + H2O = beta-D-fructose 6-phosphate + phosphate. It carries out the reaction beta-D-fructose 6-phosphate + ATP = beta-D-fructose 2,6-bisphosphate + ADP + H(+). Phosphorylation at Ser-33 inhibits the kinase and activates the bisphosphatase. Its function is as follows. Synthesis and degradation of fructose 2,6-bisphosphate. This Homo sapiens (Human) protein is 6-phosphofructo-2-kinase/fructose-2,6-bisphosphatase 1.